The sequence spans 124 residues: Putative membrane protein insertion efficiency factor (124 aa).

A disordered region spans residues M1 to W24. The span at R12–W24 shows a compositional bias: low complexity.

Belongs to the UPF0161 family.

The protein localises to the cell inner membrane. Could be involved in insertion of integral membrane proteins into the membrane. This Mesorhizobium japonicum (strain LMG 29417 / CECT 9101 / MAFF 303099) (Mesorhizobium loti (strain MAFF 303099)) protein is Putative membrane protein insertion efficiency factor.